Here is a 316-residue protein sequence, read N- to C-terminus: Olfactory receptor 12D3 (316 aa).

Residues 1–23 (MENVTTMNEFLLLGLTGVQELQP) lie on the Extracellular side of the membrane. An N-linked (GlcNAc...) asparagine glycan is attached at N3. Residues 24–44 (FFFGIFLIIYLINLIGNGSIL) traverse the membrane as a helical segment. Residues 45–52 (VMVVLEPQ) lie on the Cytoplasmic side of the membrane. Residues 53–73 (LHSPMYFFLGNLSCLDISYSS) traverse the membrane as a helical segment. Over 74 to 97 (VTLPKLLVNLVCSRRAISFLGCIT) the chain is Extracellular. A disulfide bond links C95 and C187. The helical transmembrane segment at 98–118 (QLHFFHFLGSTEAILLAIMAF) threads the bilayer. Residues 119-137 (DRFVAICNPLRYTVIMNPQ) are Cytoplasmic-facing. A helical transmembrane segment spans residues 138–158 (VCILLAAAAWLISFFYALMHS). Residues 159–195 (VMTAHLSFCGSQKLNHFFYDVKPLLELACSDTLLNQW) lie on the Extracellular side of the membrane. Residues 196-215 (LLSIVTGSISMGAFFLTLLS) form a helical membrane-spanning segment. The Cytoplasmic segment spans residues 216-236 (CFYVIGFLLFKNRSCRILHKA). The chain crosses the membrane as a helical span at residues 237-257 (LSTCASHFMVVCLFYGPVGFT). Residues 258 to 270 (YIRPASATSMIQD) are Extracellular-facing. The chain crosses the membrane as a helical span at residues 271-291 (RIMAIMYSAVTPVLNPLIYTL). Residues 292–316 (RNKEVMMALKKIFGRKLFKDWQQHH) lie on the Cytoplasmic side of the membrane.

Belongs to the G-protein coupled receptor 1 family.

The protein resides in the cell membrane. In terms of biological role, odorant receptor. This chain is Olfactory receptor 12D3 (OR12D3), found in Homo sapiens (Human).